The sequence spans 2147 residues: Large tegument protein deneddylase (2147 aa).

Residues 1 to 233 form a deubiquitination activity region; it reads MKIVRASRDQ…PDIDASVMSG (233 aa). A Peptidase C76 domain is found at 3–223; that stretch reads IVRASRDQSA…LVQIMDQYKD (221 aa). Catalysis depends on residues Cys-23, Asp-156, and His-158. Disordered stretches follow at residues 228 to 301, 1419 to 1438, 1567 to 1589, and 2034 to 2072; these read ASVM…RSRR, EIGQHKKDPPSTGEEVGLPE, SSSSGGGNGSGASSRQKDQQNAT, and RDPPRLKRASGDSSSSVPAEDRDPDARPQDSVPDQSLSE. Residues 240–261 are compositionally biased toward low complexity; it reads SISSSAASASASVSPLPSGAAS. Thr-292 is a region of interest (interaction with inner tegument protein). A compositionally biased stretch (basic and acidic residues) spans 2052 to 2061; the sequence is AEDRDPDARP.

The protein belongs to the herpesviridae large tegument protein family. Interacts with host CUL1 and CUL4A; these interactions inhibit the E3 ligase activity of cullins. Interacts with inner tegument protein. Interacts with capsid vertex specific component CVC2. Interacts with the major capsid protein/MCP.

It is found in the virion tegument. The protein resides in the host cytoplasm. It localises to the host nucleus. The enzyme catalyses Thiol-dependent hydrolysis of ester, thioester, amide, peptide and isopeptide bonds formed by the C-terminal Gly of ubiquitin (a 76-residue protein attached to proteins as an intracellular targeting signal).. Functionally, large tegument protein that plays multiple roles in the viral cycle. During viral entry, remains associated with the capsid while most of the tegument is detached and participates in the capsid transport toward the host nucleus. Plays a role in the routing of the capsid at the nuclear pore complex and subsequent uncoating. Within the host nucleus, acts as a deneddylase and promotes the degradation of nuclear CRLs (cullin-RING ubiquitin ligases) and thereby stabilizes nuclear CRL substrates, while cytoplasmic CRLs remain unaffected. These modifications prevent host cell cycle S-phase progression and create a favorable environment allowing efficient viral genome replication. Participates later in the secondary envelopment of capsids. Indeed, plays a linker role for the association of the outer viral tegument to the capsids together with the inner tegument protein. The sequence is that of Large tegument protein deneddylase (M48) from Mus musculus (Mouse).